Reading from the N-terminus, the 430-residue chain is Aspartate--tRNA(Asp/Asn) ligase (430 aa).

Residue Glu-168 participates in L-aspartate binding. The interval 190-193 (QLYK) is aspartate. Arg-212 contributes to the L-aspartate binding site. Residues 212–214 (RAE), 220–222 (RHL), and Glu-353 contribute to the ATP site. Mg(2+) is bound by residues Glu-353 and Ser-356. L-aspartate is bound by residues Ser-356 and Arg-360. 401–404 (GAER) is a binding site for ATP.

This sequence belongs to the class-II aminoacyl-tRNA synthetase family. Type 2 subfamily. In terms of assembly, homodimer. The cofactor is Mg(2+).

The protein localises to the cytoplasm. It catalyses the reaction tRNA(Asx) + L-aspartate + ATP = L-aspartyl-tRNA(Asx) + AMP + diphosphate. Its function is as follows. Aspartyl-tRNA synthetase with relaxed tRNA specificity since it is able to aspartylate not only its cognate tRNA(Asp) but also tRNA(Asn). Reaction proceeds in two steps: L-aspartate is first activated by ATP to form Asp-AMP and then transferred to the acceptor end of tRNA(Asp/Asn). The polypeptide is Aspartate--tRNA(Asp/Asn) ligase (Archaeoglobus fulgidus (strain ATCC 49558 / DSM 4304 / JCM 9628 / NBRC 100126 / VC-16)).